The primary structure comprises 497 residues: tRNA-2-methylthio-N(6)-dimethylallyladenosine synthase (497 aa).

Residues 44–161 (KKVFVTTQGC…LPELYDQSHQ (118 aa)) enclose the MTTase N-terminal domain. C53, C90, C124, C205, C209, and C212 together coordinate [4Fe-4S] cluster. The Radical SAM core domain maps to 191–423 (RVEGFKAFVS…QKVIIDSTLA (233 aa)). Residues 426 to 494 (HEMVGTTTRV…PHMVKGEIEA (69 aa)) form the TRAM domain.

It belongs to the methylthiotransferase family. MiaB subfamily. Monomer. It depends on [4Fe-4S] cluster as a cofactor.

It is found in the cytoplasm. It carries out the reaction N(6)-dimethylallyladenosine(37) in tRNA + (sulfur carrier)-SH + AH2 + 2 S-adenosyl-L-methionine = 2-methylsulfanyl-N(6)-dimethylallyladenosine(37) in tRNA + (sulfur carrier)-H + 5'-deoxyadenosine + L-methionine + A + S-adenosyl-L-homocysteine + 2 H(+). In terms of biological role, catalyzes the methylthiolation of N6-(dimethylallyl)adenosine (i(6)A), leading to the formation of 2-methylthio-N6-(dimethylallyl)adenosine (ms(2)i(6)A) at position 37 in tRNAs that read codons beginning with uridine. The sequence is that of tRNA-2-methylthio-N(6)-dimethylallyladenosine synthase from Psychrobacter cryohalolentis (strain ATCC BAA-1226 / DSM 17306 / VKM B-2378 / K5).